A 459-amino-acid polypeptide reads, in one-letter code: Argininosuccinate lyase (459 aa).

It belongs to the lyase 1 family. Argininosuccinate lyase subfamily.

The protein localises to the cytoplasm. The catalysed reaction is 2-(N(omega)-L-arginino)succinate = fumarate + L-arginine. Its pathway is amino-acid biosynthesis; L-arginine biosynthesis; L-arginine from L-ornithine and carbamoyl phosphate: step 3/3. The sequence is that of Argininosuccinate lyase from Geobacillus sp. (strain WCH70).